The following is a 91-amino-acid chain: Putative pterin-4-alpha-carbinolamine dehydratase (91 aa).

This sequence belongs to the pterin-4-alpha-carbinolamine dehydratase family.

It carries out the reaction (4aS,6R)-4a-hydroxy-L-erythro-5,6,7,8-tetrahydrobiopterin = (6R)-L-erythro-6,7-dihydrobiopterin + H2O. In Halobacterium salinarum (strain ATCC 29341 / DSM 671 / R1), this protein is Putative pterin-4-alpha-carbinolamine dehydratase.